The sequence spans 103 residues: Large ribosomal subunit protein bL21 (103 aa).

This sequence belongs to the bacterial ribosomal protein bL21 family. Part of the 50S ribosomal subunit. Contacts protein L20.

In terms of biological role, this protein binds to 23S rRNA in the presence of protein L20. This Legionella pneumophila (strain Lens) protein is Large ribosomal subunit protein bL21.